The sequence spans 325 residues: Beta-ketoacyl-[acyl-carrier-protein] synthase III (325 aa).

Catalysis depends on residues cysteine 112 and histidine 250. Residues 251–255 (QANIR) form an ACP-binding region. Residue asparagine 280 is part of the active site.

Belongs to the thiolase-like superfamily. FabH family. Homodimer.

It localises to the cytoplasm. It carries out the reaction malonyl-[ACP] + acetyl-CoA + H(+) = 3-oxobutanoyl-[ACP] + CO2 + CoA. Its pathway is lipid metabolism; fatty acid biosynthesis. Functionally, catalyzes the condensation reaction of fatty acid synthesis by the addition to an acyl acceptor of two carbons from malonyl-ACP. Catalyzes the first condensation reaction which initiates fatty acid synthesis and may therefore play a role in governing the total rate of fatty acid production. Possesses both acetoacetyl-ACP synthase and acetyl transacylase activities. Its substrate specificity determines the biosynthesis of branched-chain and/or straight-chain of fatty acids. The chain is Beta-ketoacyl-[acyl-carrier-protein] synthase III from Streptococcus mutans serotype c (strain ATCC 700610 / UA159).